The sequence spans 25 residues: Small ribosomal subunit protein uS19 (25 aa).

The interval 1–25 is disordered; it reads GHKLGEFAPTRTFRGHKKEDKKVKR.

The protein belongs to the universal ribosomal protein uS19 family.

In terms of biological role, protein S19 forms a complex with S13 that binds strongly to the 16S ribosomal RNA. This is Small ribosomal subunit protein uS19 (rpsS) from Acholeplasma laidlawii.